A 236-amino-acid polypeptide reads, in one-letter code: Purine nucleoside phosphorylase DeoD-type 1 (236 aa).

Histidine 5 contributes to the a purine D-ribonucleoside binding site. Phosphate contacts are provided by residues glycine 21, arginine 25, arginine 44, and 88 to 91 (RVGS). A purine D-ribonucleoside is bound by residues 180–182 (EME) and 204–205 (TD). Aspartate 205 acts as the Proton donor in catalysis.

It belongs to the PNP/UDP phosphorylase family. In terms of assembly, homohexamer; trimer of homodimers.

The catalysed reaction is a purine D-ribonucleoside + phosphate = a purine nucleobase + alpha-D-ribose 1-phosphate. It carries out the reaction a purine 2'-deoxy-D-ribonucleoside + phosphate = a purine nucleobase + 2-deoxy-alpha-D-ribose 1-phosphate. Functionally, catalyzes the reversible phosphorolytic breakdown of the N-glycosidic bond in the beta-(deoxy)ribonucleoside molecules, with the formation of the corresponding free purine bases and pentose-1-phosphate. In Shewanella oneidensis (strain ATCC 700550 / JCM 31522 / CIP 106686 / LMG 19005 / NCIMB 14063 / MR-1), this protein is Purine nucleoside phosphorylase DeoD-type 1.